Here is a 201-residue protein sequence, read N- to C-terminus: Large ribosomal subunit protein uL4 (201 aa).

Residues 44-73 (RAQKSRAEVKASRKKPWRQKGTGRARAGSV) form a disordered region. Basic residues predominate over residues 55–66 (SRKKPWRQKGTG).

The protein belongs to the universal ribosomal protein uL4 family. In terms of assembly, part of the 50S ribosomal subunit.

Functionally, one of the primary rRNA binding proteins, this protein initially binds near the 5'-end of the 23S rRNA. It is important during the early stages of 50S assembly. It makes multiple contacts with different domains of the 23S rRNA in the assembled 50S subunit and ribosome. In terms of biological role, forms part of the polypeptide exit tunnel. This Hamiltonella defensa subsp. Acyrthosiphon pisum (strain 5AT) protein is Large ribosomal subunit protein uL4.